A 104-amino-acid polypeptide reads, in one-letter code: Large ribosomal subunit protein uL24 (104 aa).

This sequence belongs to the universal ribosomal protein uL24 family. As to quaternary structure, part of the 50S ribosomal subunit.

Functionally, one of two assembly initiator proteins, it binds directly to the 5'-end of the 23S rRNA, where it nucleates assembly of the 50S subunit. One of the proteins that surrounds the polypeptide exit tunnel on the outside of the subunit. In Salmonella paratyphi A (strain ATCC 9150 / SARB42), this protein is Large ribosomal subunit protein uL24.